Reading from the N-terminus, the 900-residue chain is 3'-5' exonuclease DinG (900 aa).

The Exonuclease domain occupies 8–161; the sequence is VVDLETTGNQ…DEDAATTAQL (154 aa). Residues 241-496 form the Helicase ATP-binding domain; sequence TLVTKELGLT…KSIDLLEQQR (256 aa). 276–283 lines the ATP pocket; sequence APLGSGKS. Positions 448–451 match the DEAH box motif; it reads DEAH. Positions 714-883 constitute a Helicase C-terminal domain; that stretch reads YVIEYVSVVE…RYRQKKGDIK (170 aa).

Belongs to the helicase family. DinG subfamily. Type 2 sub-subfamily.

Functionally, 3'-5' exonuclease. The polypeptide is 3'-5' exonuclease DinG (Staphylococcus saprophyticus subsp. saprophyticus (strain ATCC 15305 / DSM 20229 / NCIMB 8711 / NCTC 7292 / S-41)).